A 58-amino-acid polypeptide reads, in one-letter code: Small ribosomal subunit protein bS21 (58 aa).

This sequence belongs to the bacterial ribosomal protein bS21 family.

The polypeptide is Small ribosomal subunit protein bS21 (Prochlorococcus marinus (strain MIT 9515)).